The primary structure comprises 462 residues: ATP synthase subunit beta (462 aa).

151-158 provides a ligand contact to ATP; sequence GGAGVGKT.

The protein belongs to the ATPase alpha/beta chains family. F-type ATPases have 2 components, CF(1) - the catalytic core - and CF(0) - the membrane proton channel. CF(1) has five subunits: alpha(3), beta(3), gamma(1), delta(1), epsilon(1). CF(0) has three main subunits: a(1), b(2) and c(9-12). The alpha and beta chains form an alternating ring which encloses part of the gamma chain. CF(1) is attached to CF(0) by a central stalk formed by the gamma and epsilon chains, while a peripheral stalk is formed by the delta and b chains.

Its subcellular location is the cell inner membrane. The enzyme catalyses ATP + H2O + 4 H(+)(in) = ADP + phosphate + 5 H(+)(out). In terms of biological role, produces ATP from ADP in the presence of a proton gradient across the membrane. The catalytic sites are hosted primarily by the beta subunits. The polypeptide is ATP synthase subunit beta (Chlorobaculum parvum (strain DSM 263 / NCIMB 8327) (Chlorobium vibrioforme subsp. thiosulfatophilum)).